The following is a 490-amino-acid chain: MINHSLKQLADMLASKEISSVELTQEYLNRIAQLNPEINAYITVNPELSLAQAQAADQRIANGDAGPLTGIPIAQKDIFCAKGWRTTCGSRMLENFIAPYDAGIIERFNAAGAVNLGKTNMDEFAMGSSNETSYFGKVQNPWDRSRVPGGSSGGSAAAVAARLCAAATGTDTGGSIRQPASLCGLSGLKPTYGLASRYGMIAFASSLDQAGPMAHSAEDMALMMNVMTGFDERDSTSLQREKEDYTRELGKSLAGIRIGLPKEYFAEGLDAGVAKVIEAAVDEYRKLGAEIVEVTLPNTMLSIPVYYVLAPAEASSNLSRYDGVRFGHRAAEYDDLMDMYCKSRAEGFGEEVKRRILIGTYVLSAGYYDAYYLKAQQIRRLIAEDFAKAFEQCDLILGPTAPSTAFKSGEKADDPVSMYLQDIYTIAVNLAGLPGMSIPAGFAPAADGVELPVGLQIIGNYFDEARMLNAGHVYQQVTDWHTRMPEGIAS.

Catalysis depends on charge relay system residues K76 and S151. Catalysis depends on S175, which acts as the Acyl-ester intermediate.

This sequence belongs to the amidase family. GatA subfamily. Heterotrimer of A, B and C subunits.

The enzyme catalyses L-glutamyl-tRNA(Gln) + L-glutamine + ATP + H2O = L-glutaminyl-tRNA(Gln) + L-glutamate + ADP + phosphate + H(+). Its function is as follows. Allows the formation of correctly charged Gln-tRNA(Gln) through the transamidation of misacylated Glu-tRNA(Gln) in organisms which lack glutaminyl-tRNA synthetase. The reaction takes place in the presence of glutamine and ATP through an activated gamma-phospho-Glu-tRNA(Gln). The sequence is that of Glutamyl-tRNA(Gln) amidotransferase subunit A from Methylobacillus flagellatus (strain ATCC 51484 / DSM 6875 / VKM B-1610 / KT).